Here is a 199-residue protein sequence, read N- to C-terminus: MNSGGGIVAAAAPSSGGGNVEWHVRPPNPKNPVVFFDVSIGGIPAGRIKMELFADIAPKTAENFRQFCTGELRKAGKPLGYKECQFHRVIKDFMVQSGDFLKNDGSGCMSIYGHKFEDENFTAKHTGPGLLSMANSGPNTNGCQFFITCAKCDWLDNKHVVFGRVLGDGLLVMRKIENVAIGPNNRPKLAVVITECGEM.

A PPIase cyclophilin-type domain is found at 35-198 (FFDVSIGGIP…LAVVITECGE (164 aa)).

It belongs to the cyclophilin-type PPIase family. Ubiquitous.

It catalyses the reaction [protein]-peptidylproline (omega=180) = [protein]-peptidylproline (omega=0). In terms of biological role, PPIases accelerate the folding of proteins. It catalyzes the cis-trans isomerization of proline imidic peptide bonds in oligopeptides. The chain is Peptidyl-prolyl cis-trans isomerase CYP22 (CYP22) from Arabidopsis thaliana (Mouse-ear cress).